The primary structure comprises 197 residues: MMSSTTIDVPAESSNVAKGKAVLVAAPRPGGWKKGIAIVDFVLRLGAVAAALGAATTMATADQTLPFFTQFFQFEASYDSFTTFQFFVITMALVGCYLVLSLPLSIVSIIRPHALGPKLFLIILDTVFLTLATASAASAAAVVYVAHNGNQDSNWLAICNQFGDFCAQTSGAVVSSLVAVVVFVLLIVMSALALGKH.

Residues 1 to 34 (MMSSTTIDVPAESSNVAKGKAVLVAAPRPGGWKK) are Cytoplasmic-facing. The chain crosses the membrane as a helical span at residues 35–55 (GIAIVDFVLRLGAVAAALGAA). Over 56 to 85 (TTMATADQTLPFFTQFFQFEASYDSFTTFQ) the chain is Extracellular. Residues 86–106 (FFVITMALVGCYLVLSLPLSI) form a helical membrane-spanning segment. Over 107 to 118 (VSIIRPHALGPK) the chain is Cytoplasmic. Residues 119–139 (LFLIILDTVFLTLATASAASA) traverse the membrane as a helical segment. Topologically, residues 140 to 171 (AAVVYVAHNGNQDSNWLAICNQFGDFCAQTSG) are extracellular. A helical membrane pass occupies residues 172–192 (AVVSSLVAVVVFVLLIVMSAL). Topologically, residues 193–197 (ALGKH) are cytoplasmic.

It belongs to the Casparian strip membrane proteins (CASP) family. In terms of assembly, homodimer and heterodimers.

It localises to the cell membrane. In terms of biological role, regulates membrane-cell wall junctions and localized cell wall deposition. Required for establishment of the Casparian strip membrane domain (CSD) and the subsequent formation of Casparian strips, a cell wall modification of the root endodermis that determines an apoplastic barrier between the intraorganismal apoplasm and the extraorganismal apoplasm and prevents lateral diffusion. The sequence is that of Casparian strip membrane protein 4 from Lotus japonicus (Lotus corniculatus var. japonicus).